Reading from the N-terminus, the 640-residue chain is Probable potassium transport system protein Kup 2 (640 aa).

A disordered region spans residues 1-20; the sequence is MTADIAATPAETPATNGHGD. The next 12 membrane-spanning stretches (helical) occupy residues 30–50, 71–91, 117–137, 155–175, 183–203, 224–244, 265–285, 294–314, 363–383, 385–405, 410–430, and 437–457; these read LTLG…LYAL, VVSL…VVIL, ASII…DAVI, AAFD…LFAV, VAAF…IAAF, FMLH…LAVT, WLFV…ALVI, PFFL…ATVA, LLLV…ALAS, YGIS…VVIW, WSPI…LTFL, and VLEG…LMYT.

This sequence belongs to the HAK/KUP transporter (TC 2.A.72) family.

It is found in the cell inner membrane. It carries out the reaction K(+)(in) + H(+)(in) = K(+)(out) + H(+)(out). Functionally, transport of potassium into the cell. Likely operates as a K(+):H(+) symporter. The protein is Probable potassium transport system protein Kup 2 of Bradyrhizobium sp. (strain ORS 278).